A 171-amino-acid polypeptide reads, in one-letter code: Putative auxin-responsive protein IAA29 (171 aa).

A PB1 domain is found at 19-114 (SRFVKVFMHG…TVKKIYIVPA (96 aa)). Residues 117–171 (QNENDYQEEEEDNAAAAATADEDGDGAAADDGVAAAADDVDDVAGYTSNDDPSFD) form a disordered region. Low complexity predominate over residues 142–153 (GAAADDGVAAAA). Polar residues predominate over residues 162 to 171 (YTSNDDPSFD).

Belongs to the Aux/IAA family. As to quaternary structure, homodimers and heterodimers.

It is found in the nucleus. Its function is as follows. Aux/IAA proteins are short-lived transcriptional factors that function as repressors of early auxin response genes at low auxin concentrations. The protein is Putative auxin-responsive protein IAA29 (IAA29) of Oryza sativa subsp. japonica (Rice).